A 555-amino-acid chain; its full sequence is Membrane protein insertase YidC (555 aa).

Residues 7-24 (ILWVIFSMSLVLLYDNWQ) form a helical membrane-spanning segment. Residues 61–81 (TAGAAAPAAPGGAPQAAAQPT) form a disordered region. 5 helical membrane passes run 341 to 361 (GWLT…HGFL), 364 to 384 (WGWS…PLSA), 430 to 450 (LGGC…YWVL), 468 to 488 (LSVP…MFVQ), and 503 to 523 (VMMI…AGLV).

The protein belongs to the OXA1/ALB3/YidC family. Type 1 subfamily. In terms of assembly, interacts with the Sec translocase complex via SecD. Specifically interacts with transmembrane segments of nascent integral membrane proteins during membrane integration.

Its subcellular location is the cell inner membrane. Its function is as follows. Required for the insertion and/or proper folding and/or complex formation of integral membrane proteins into the membrane. Involved in integration of membrane proteins that insert both dependently and independently of the Sec translocase complex, as well as at least some lipoproteins. Aids folding of multispanning membrane proteins. This Cupriavidus pinatubonensis (strain JMP 134 / LMG 1197) (Cupriavidus necator (strain JMP 134)) protein is Membrane protein insertase YidC.